The following is a 395-amino-acid chain: Flap endonuclease 1 (395 aa).

Positions 1-108 (MGILGLSKLL…DELEMRRQKA (108 aa)) are N-domain. Mg(2+) is bound at residue aspartate 34. Residue arginine 74 participates in DNA binding. Residue aspartate 90 participates in Mg(2+) binding. Residues 116–136 (EKAKDAGDDEMMEKMSKRTVR) are disordered. Residues 126-257 (MMEKMSKRTV…QKAWEGIQRY (132 aa)) form an I-domain region. Glutamate 162, glutamate 164, aspartate 183, and aspartate 185 together coordinate Mg(2+). Glutamate 162 is a DNA binding site. Residues glycine 235 and aspartate 237 each contribute to the DNA site. Aspartate 237 provides a ligand contact to Mg(2+). The segment at 340-348 (TQGRLDSFF) is interaction with PCNA.

It belongs to the XPG/RAD2 endonuclease family. FEN1 subfamily. In terms of assembly, interacts with PCNA. Three molecules of FEN1 bind to one PCNA trimer with each molecule binding to one PCNA monomer. PCNA stimulates the nuclease activity without altering cleavage specificity. Mg(2+) serves as cofactor. Post-translationally, phosphorylated. Phosphorylation upon DNA damage induces relocalization to the nuclear plasma.

The protein resides in the nucleus. It is found in the nucleolus. The protein localises to the nucleoplasm. Its subcellular location is the mitochondrion. Functionally, structure-specific nuclease with 5'-flap endonuclease and 5'-3' exonuclease activities involved in DNA replication and repair. During DNA replication, cleaves the 5'-overhanging flap structure that is generated by displacement synthesis when DNA polymerase encounters the 5'-end of a downstream Okazaki fragment. It enters the flap from the 5'-end and then tracks to cleave the flap base, leaving a nick for ligation. Also involved in the long patch base excision repair (LP-BER) pathway, by cleaving within the apurinic/apyrimidinic (AP) site-terminated flap. Acts as a genome stabilization factor that prevents flaps from equilibrating into structures that lead to duplications and deletions. Also possesses 5'-3' exonuclease activity on nicked or gapped double-stranded DNA, and exhibits RNase H activity. Also involved in replication and repair of rDNA and in repairing mitochondrial DNA. This is Flap endonuclease 1 from Leishmania major.